Reading from the N-terminus, the 208-residue chain is Large ribosomal subunit protein uL4 (208 aa).

Positions 45–89 (RQGTHAHKNRSAVSGGGKKPWRQKGTGRARQGSTRSPQWRGGGTV) are disordered.

Belongs to the universal ribosomal protein uL4 family. In terms of assembly, part of the 50S ribosomal subunit.

Functionally, one of the primary rRNA binding proteins, this protein initially binds near the 5'-end of the 23S rRNA. It is important during the early stages of 50S assembly. It makes multiple contacts with different domains of the 23S rRNA in the assembled 50S subunit and ribosome. Forms part of the polypeptide exit tunnel. The polypeptide is Large ribosomal subunit protein uL4 (Lactococcus lactis subsp. cremoris (strain SK11)).